We begin with the raw amino-acid sequence, 202 residues long: uncharacterized protein (202 aa).

Positions 179-202 are disordered; it reads FDEQDSTPELPPNYLLDSQKKSQG.

This is an uncharacterized protein from Haemophilus influenzae (strain ATCC 51907 / DSM 11121 / KW20 / Rd).